Reading from the N-terminus, the 718-residue chain is MHSTQIPPQQKQKRRLRLTVLAAAASMLAAACVSGDDNNNGNGSNPNTKPANIGTVTINSYNGTTDDLLTAGLGKDGLASATAPLPANPTAPTAAELRRYAIHTNYRAIVDTTASGGYGSLYGPNVDAQGNVTGSDGKVAGVEYLAFSDDGSGQQNVTMLVQIPASFNTSKPCMITATSSGSRGVYGAIATGEWGLKRGCAVAYTDKGTGAAPHDLDTDTVPLIDGTRATRAAAGKNAQFAAPAGATSLADFTAANPHRLAFKHAHSQRNPEKDWGKFTLQAVEFAIWAINDRFGAVSANGTRQRTLDKDRIVVIASSVSNGGGAAVAAAEQDAGGLIDGVAVGEPNLNMPPNTGIVVQRGATPVAASGRTLYDYTTTANLLQHCAARATALTQAPFYTNPATATFFANRCQTLAEKGLVSGANTDEQSASALQALHDAGWEAESDDLHPSLAVFDVAAAISVNYANAYAQASVTDRLCGYSFASTLTDLKPAAIAPAALASMFATGNGVPPQPPVQLINDLDPQHGPYLNLASVSPSTLREDLNYDGANCLRSLLAGSDAAARALQAGQALTLRNGNLRGKPAVIVHGRSDGLLPVNHTSRPYLGLNRQQEGVTSKLSYVEVENAQHFDAFIGLVPGYSNRYVPLHVYLNRALDAVYDNLTAGKALPPSQVLRTTPRGGTLNTPAPALLPSNVPPFAASPAAGNAITVNANAVQVPD.

Serine 320 serves as the catalytic Charge relay system.

Belongs to the D-(-)-3-hydroxybutyrate oligomer hydrolase family.

It is found in the cytoplasm. The catalysed reaction is (3R)-hydroxybutanoate dimer + H2O = 2 (R)-3-hydroxybutanoate + H(+). Its pathway is lipid metabolism; butanoate metabolism. Inhibited by diisopropylfluorophosphate (DFP). Functionally, participates in the degradation of poly-3-hydroxybutyrate (PHB). It works downstream of poly(3-hydroxybutyrate) depolymerase, hydrolyzing D(-)-3-hydroxybutyrate oligomers of various length (3HB-oligomers) into 3HB-monomers. Seems to have also poly(3-hydroxybutyrate) depolymerase activity since it is able to release 3HB-monomers from artificial amorphous PHB. The protein is D-(-)-3-hydroxybutyrate oligomer hydrolase (phaZ2) of Cupriavidus necator (strain ATCC 17699 / DSM 428 / KCTC 22496 / NCIMB 10442 / H16 / Stanier 337) (Ralstonia eutropha).